A 140-amino-acid chain; its full sequence is Secreted RxLR effector protein 37 (140 aa).

An N-terminal signal peptide occupies residues 1-22 (MTYRLPFVAVILFVTAKHVVLA). Residues 57–76 (RFLRQLEKKPGVNDKRDEER) carry the RxLR-dEER motif.

Belongs to the RxLR effector family.

It localises to the secreted. Its subcellular location is the host nucleus. It is found in the host cytoplasm. In terms of biological role, secreted effector that completely suppresses the host cell death induced by cell death-inducing proteins. The chain is Secreted RxLR effector protein 37 from Plasmopara viticola (Downy mildew of grapevine).